A 115-amino-acid chain; its full sequence is Holo-[acyl-carrier-protein] synthase (115 aa).

Residues aspartate 6 and glutamate 51 each contribute to the Mg(2+) site.

The protein belongs to the P-Pant transferase superfamily. AcpS family. It depends on Mg(2+) as a cofactor.

The protein resides in the cytoplasm. It catalyses the reaction apo-[ACP] + CoA = holo-[ACP] + adenosine 3',5'-bisphosphate + H(+). In terms of biological role, transfers the 4'-phosphopantetheine moiety from coenzyme A to a Ser of acyl-carrier-protein. The protein is Holo-[acyl-carrier-protein] synthase of Campylobacter jejuni (strain RM1221).